The chain runs to 342 residues: Cell cycle control protein 50C (342 aa).

Residues 1-33 (MEMMPQYDLSRLPENTALKQQTLPTQQLNLSAS) lie on the Cytoplasmic side of the membrane. The helical transmembrane segment at 34 to 54 (VVLSIFFITGGFCLSIGIILL) threads the bilayer. At 55-306 (LSAKSTKKIE…STLTWIGGGG (252 aa)) the chain is on the extracellular side. N-linked (GlcNAc...) asparagine glycosylation is found at Asn66, Asn80, Asn89, and Asn205. A helical transmembrane segment spans residues 307–327 (LFLGLTYTVTGALTLLASFAI). At 328-342 (LTIHLMLKRSKLNFL) the chain is on the cytoplasmic side.

The protein belongs to the CDC50/LEM3 family. In terms of tissue distribution, specifically expressed in testis.

It localises to the membrane. This is Cell cycle control protein 50C (Tmem30c) from Mus musculus (Mouse).